The primary structure comprises 144 residues: Large ribosomal subunit protein uL16 (144 aa).

Basic residues predominate over residues 1–14; that stretch reads MLTPKRVKHRKQHR. Positions 1-22 are disordered; that stretch reads MLTPKRVKHRKQHRPSLAGKAN.

Belongs to the universal ribosomal protein uL16 family. Part of the 50S ribosomal subunit.

Binds 23S rRNA and is also seen to make contacts with the A and possibly P site tRNAs. The chain is Large ribosomal subunit protein uL16 from Syntrophomonas wolfei subsp. wolfei (strain DSM 2245B / Goettingen).